We begin with the raw amino-acid sequence, 62 residues long: MRCLPVFVILLLLIASAPSVDARPKTKDDIPLVSFQDHAKRILQTFESRYDCCKTFECCHWG.

Residues Met1–Ala22 form the signal peptide. Positions Arg23–Ser48 are excised as a propeptide. Trp61 is modified (tryptophan amide).

Belongs to the conotoxin T superfamily. In terms of processing, contains 2 disulfide bonds that can be either 'C1-C3, C2-C4' or 'C1-C4, C2-C3', since these disulfide connectivities have been observed for conotoxins with cysteine framework V (for examples, see AC P0DQQ7 and AC P81755). As to expression, expressed by the venom duct.

The protein resides in the secreted. The chain is Conotoxin Pn-014 from Conus pennaceus (Feathered cone).